A 58-amino-acid chain; its full sequence is Preprotein translocase subunit SecG (58 aa).

Residues 1-32 (MARKRRKGGEGLVTAIGLVRFYEEVEEKIKVP) are Cytoplasmic-facing. A helical transmembrane segment spans residues 33 to 54 (PEAVIGAAFALSIMTIALDLLL). Residues 55-58 (KAAR) lie on the Extracellular side of the membrane.

Belongs to the SEC61-beta family. In terms of assembly, component of the protein translocase complex. Heterotrimer consisting of alpha (SecY), beta (SecG) and gamma (SecE) subunits. Can form oligomers of the heterotrimer.

Its subcellular location is the cell membrane. Its function is as follows. Involved in protein export. The function of the beta subunit is unknown, but it may be involved in stabilization of the trimeric complex. The polypeptide is Preprotein translocase subunit SecG (Ignicoccus hospitalis (strain KIN4/I / DSM 18386 / JCM 14125)).